Reading from the N-terminus, the 485-residue chain is NADH-quinone oxidoreductase subunit N (485 aa).

14 helical membrane-spanning segments follow: residues 8–28 (LIAL…MLSI), 35–55 (FLNA…LWFV), 71–91 (GFAM…CTFA), 105–125 (FYLL…ANHL), 127–147 (SLFL…GYAF), 159–179 (YTIL…LVYA), 203–223 (LLAG…LVPF), 235–255 (PAPV…GVVM), 271–291 (VVLA…ALSQ), 297–317 (LLGY…IALQ), 326–346 (VGVY…VVSL), 373–393 (AAVM…LGFI), 408–430 (WWLV…RVAV), and 455–475 (IVVL…QPLI).

Belongs to the complex I subunit 2 family. NDH-1 is composed of 13 different subunits. Subunits NuoA, H, J, K, L, M, N constitute the membrane sector of the complex.

Its subcellular location is the cell inner membrane. It carries out the reaction a quinone + NADH + 5 H(+)(in) = a quinol + NAD(+) + 4 H(+)(out). In terms of biological role, NDH-1 shuttles electrons from NADH, via FMN and iron-sulfur (Fe-S) centers, to quinones in the respiratory chain. The immediate electron acceptor for the enzyme in this species is believed to be ubiquinone. Couples the redox reaction to proton translocation (for every two electrons transferred, four hydrogen ions are translocated across the cytoplasmic membrane), and thus conserves the redox energy in a proton gradient. The chain is NADH-quinone oxidoreductase subunit N from Escherichia coli O6:K15:H31 (strain 536 / UPEC).